An 828-amino-acid chain; its full sequence is Periplasmic nitrate reductase (828 aa).

The segment at residues 1–31 (MKLSRRSFMKANAVAAAAAAAGLSVPGVARA) is a signal peptide (tat-type signal). Residues 39–95 (IKWDKAPCRFCGTGCGVLVGTQQGRVVACQGDPDAPVNRGLNCIKGYFLPKIMYGKD) enclose the 4Fe-4S Mo/W bis-MGD-type domain. Residues Cys46, Cys49, Cys53, and Cys81 each coordinate [4Fe-4S] cluster. Mo-bis(molybdopterin guanine dinucleotide) contacts are provided by residues Lys83, Gln150, Asn175, Cys179, 212–219 (WGSNMAEM), 243–247 (STFQH), 262–264 (QSD), Met372, Gln376, Asn482, 508–509 (SD), Lys531, Asp558, and 718–727 (TGRVLEHWHT). Phe794 serves as a coordination point for substrate. Mo-bis(molybdopterin guanine dinucleotide)-binding residues include Asn802 and Lys819.

The protein belongs to the prokaryotic molybdopterin-containing oxidoreductase family. NasA/NapA/NarB subfamily. Component of the periplasmic nitrate reductase NapAB complex composed of NapA and NapB. The cofactor is [4Fe-4S] cluster. Requires Mo-bis(molybdopterin guanine dinucleotide) as cofactor. Post-translationally, predicted to be exported by the Tat system. The position of the signal peptide cleavage has not been experimentally proven.

It localises to the periplasm. The enzyme catalyses 2 Fe(II)-[cytochrome] + nitrate + 2 H(+) = 2 Fe(III)-[cytochrome] + nitrite + H2O. Catalytic subunit of the periplasmic nitrate reductase complex NapAB. Receives electrons from NapB and catalyzes the reduction of nitrate to nitrite. This Salmonella schwarzengrund (strain CVM19633) protein is Periplasmic nitrate reductase.